The following is a 346-amino-acid chain: S-adenosylmethionine:tRNA ribosyltransferase-isomerase (346 aa).

The protein belongs to the QueA family. As to quaternary structure, monomer.

The protein resides in the cytoplasm. The catalysed reaction is 7-aminomethyl-7-carbaguanosine(34) in tRNA + S-adenosyl-L-methionine = epoxyqueuosine(34) in tRNA + adenine + L-methionine + 2 H(+). It functions in the pathway tRNA modification; tRNA-queuosine biosynthesis. Its function is as follows. Transfers and isomerizes the ribose moiety from AdoMet to the 7-aminomethyl group of 7-deazaguanine (preQ1-tRNA) to give epoxyqueuosine (oQ-tRNA). This chain is S-adenosylmethionine:tRNA ribosyltransferase-isomerase, found in Lysinibacillus sphaericus (strain C3-41).